The sequence spans 27 residues: Flagellar filament 31.5 kDa core protein (27 aa).

This sequence belongs to the bacterial flagellin family. As to quaternary structure, the flagellum consists of an outer layer composed of repeating units of FlaA around a core that contains one or all of five antigenically related polypeptides.

The protein resides in the periplasmic flagellum. It is found in the periplasm. Functionally, component of the core of the flagella. The chain is Flagellar filament 31.5 kDa core protein from Spirochaeta aurantia.